A 275-amino-acid chain; its full sequence is LDMGHMVNAIEQVDEFLDLGANAIEFDVDFDDDGVAKYTHHGIPCDCGRLCTKYAVLTEYLDYVRQVTTPGDPKFRKELVLLALDLKLQRISSEKAYAAGVDVATKLLDHYWMRGWNGGRAYILLNIPLVEDYEFIRAFKDTLRKEGHEQYNAKVGINFTGNEDLDEIREVLEKLGEDEHIWQADGITSCFPRGTERLKKALEKRDTPGYKYISKVYAWTLVRSSIMRRSLRLGVDGVMSNYPDRVVKVLKEKEFSDKFRLATYADNPWEKFTPI.

The active site involves H5. Residues E25 and D27 each contribute to the Mg(2+) site. H41 acts as the Nucleophile in catalysis. 2 cysteine pairs are disulfide-bonded: C45-C51 and C47-C190. D85 is a binding site for Mg(2+).

Belongs to the arthropod phospholipase D family. Class II subfamily. Requires Mg(2+) as cofactor. As to expression, expressed by the venom gland.

It localises to the secreted. It carries out the reaction an N-(acyl)-sphingosylphosphocholine = an N-(acyl)-sphingosyl-1,3-cyclic phosphate + choline. The enzyme catalyses an N-(acyl)-sphingosylphosphoethanolamine = an N-(acyl)-sphingosyl-1,3-cyclic phosphate + ethanolamine. It catalyses the reaction a 1-acyl-sn-glycero-3-phosphocholine = a 1-acyl-sn-glycero-2,3-cyclic phosphate + choline. The catalysed reaction is a 1-acyl-sn-glycero-3-phosphoethanolamine = a 1-acyl-sn-glycero-2,3-cyclic phosphate + ethanolamine. Dermonecrotic toxins cleave the phosphodiester linkage between the phosphate and headgroup of certain phospholipids (sphingolipid and lysolipid substrates), forming an alcohol (often choline) and a cyclic phosphate. This toxin acts on sphingomyelin (SM). It may also act on ceramide phosphoethanolamine (CPE), lysophosphatidylcholine (LPC) and lysophosphatidylethanolamine (LPE), but not on lysophosphatidylserine (LPS), and lysophosphatidylglycerol (LPG). It acts by transphosphatidylation, releasing exclusively cyclic phosphate products as second products. Induces dermonecrosis, hemolysis, increased vascular permeability, edema, inflammatory response, and platelet aggregation. This Sicarius peruensis (Six-eyed sand spider) protein is Dermonecrotic toxin SpeSicTox-betaIIA2iii.